Consider the following 1014-residue polypeptide: DNA translocase FtsK 2 (1014 aa).

The chain crosses the membrane as a helical span at residues 1 to 21; it reads MFWIVLIVILLLALAGLFFVR. 3 disordered regions span residues 89–142, 283–318, and 487–525; these read ESEP…EDIA, RHAG…RRRV, and SQAV…AVSE. Acidic residues predominate over residues 121–140; that stretch reads EEAETEEAEAAEEEAADTED. Positions 298 to 307 are enriched in polar residues; sequence DVSQGQSVSD. A FtsK domain is found at 662 to 871; sequence GQPVVTDLGK…FQVSSKIDSR (210 aa). Position 682–687 (682–687) interacts with ATP; the sequence is GSGKSV.

Belongs to the FtsK/SpoIIIE/SftA family. Homohexamer. Forms a ring that surrounds DNA.

It localises to the cell inner membrane. In terms of biological role, essential cell division protein that coordinates cell division and chromosome segregation. The N-terminus is involved in assembly of the cell-division machinery. The C-terminus functions as a DNA motor that moves dsDNA in an ATP-dependent manner towards the dif recombination site, which is located within the replication terminus region. Translocation stops specifically at Xer-dif sites, where FtsK interacts with the Xer recombinase, allowing activation of chromosome unlinking by recombination. FtsK orienting polar sequences (KOPS) guide the direction of DNA translocation. FtsK can remove proteins from DNA as it translocates, but translocation stops specifically at XerCD-dif site, thereby preventing removal of XerC and XerD from dif. The chain is DNA translocase FtsK 2 (ftsK2) from Neisseria meningitidis serogroup A / serotype 4A (strain DSM 15465 / Z2491).